A 510-amino-acid chain; its full sequence is Glycogen synthase (510 aa).

Lys18 provides a ligand contact to ADP-alpha-D-glucose.

It belongs to the glycosyltransferase 1 family. Bacterial/plant glycogen synthase subfamily.

It catalyses the reaction [(1-&gt;4)-alpha-D-glucosyl](n) + ADP-alpha-D-glucose = [(1-&gt;4)-alpha-D-glucosyl](n+1) + ADP + H(+). It functions in the pathway glycan biosynthesis; glycogen biosynthesis. Functionally, synthesizes alpha-1,4-glucan chains using ADP-glucose. This chain is Glycogen synthase, found in Bordetella bronchiseptica (strain ATCC BAA-588 / NCTC 13252 / RB50) (Alcaligenes bronchisepticus).